The sequence spans 423 residues: Carboxypeptidase B2 (423 aa).

The first 22 residues, 1–22, serve as a signal peptide directing secretion; it reads MKLYSLGVLVATVLFCGEHAFA. The propeptide at 23-114 is activation peptide; sequence FQRGQVLSAL…QTSNDTISPR (92 aa). N-linked (GlcNAc...) asparagine glycosylation is found at N44, N73, N85, and N108. A Peptidase M14 domain is found at 122 to 419; that stretch reads QYHSLNEIYS…VAVAKIASHV (298 aa). Residues C178 and C191 are joined by a disulfide bond. Positions 181 and 184 each coordinate Zn(2+). Substrate is bound by residues 181–184 and R239; that span reads HARE. N-linked (GlcNAc...) asparagine glycosylation occurs at N241. Intrachain disulfides connect C250–C274 and C265–C279. Residue 256–257 coordinates substrate; the sequence is NR. Position 310 (H310) interacts with Zn(2+). Substrate-binding positions include 311–312 and Y363; that span reads SY. E385 acts as the Proton donor/acceptor in catalysis.

Belongs to the peptidase M14 family. The cofactor is Zn(2+).

It is found in the secreted. The catalysed reaction is Release of C-terminal Arg and Lys from a polypeptide.. TAFI/CPB2 is unique among carboxypeptidases in that it spontaneously inactivates with a short half-life, a property that is crucial for its role in controlling blood clot lysis. The zymogen is stabilized by interactions with the activation peptide. Release of the activation peptide increases a dynamic flap mobility and in time this leads to conformational changes that disrupt the catalytic site and expose a cryptic thrombin-cleavage site present at Arg-324. Functionally, cleaves C-terminal arginine or lysine residues from biologically active peptides such as kinins or anaphylatoxins in the circulation thereby regulating their activities. Down-regulates fibrinolysis by removing C-terminal lysine residues from fibrin that has already been partially degraded by plasmin. This chain is Carboxypeptidase B2 (CPB2), found in Bos taurus (Bovine).